The sequence spans 426 residues: Enolase (426 aa).

Glutamine 163 is a (2R)-2-phosphoglycerate binding site. Catalysis depends on glutamate 205, which acts as the Proton donor. Residues aspartate 242, glutamate 285, and aspartate 312 each contribute to the Mg(2+) site. The (2R)-2-phosphoglycerate site is built by lysine 337, arginine 366, serine 367, and lysine 388. Lysine 337 (proton acceptor) is an active-site residue.

This sequence belongs to the enolase family. The cofactor is Mg(2+).

It localises to the cytoplasm. The protein localises to the secreted. It is found in the cell surface. It carries out the reaction (2R)-2-phosphoglycerate = phosphoenolpyruvate + H2O. The protein operates within carbohydrate degradation; glycolysis; pyruvate from D-glyceraldehyde 3-phosphate: step 4/5. Catalyzes the reversible conversion of 2-phosphoglycerate (2-PG) into phosphoenolpyruvate (PEP). It is essential for the degradation of carbohydrates via glycolysis. The protein is Enolase of Phenylobacterium zucineum (strain HLK1).